The sequence spans 643 residues: Phosphomethylpyrimidine synthase (643 aa).

Substrate-binding positions include N221, M250, Y279, H315, 335–337, 376–379, and E415; these read SRG and DGLR. Position 419 (H419) interacts with Zn(2+). Y442 is a substrate binding site. Position 483 (H483) interacts with Zn(2+). Residues C563, C566, and C571 each contribute to the [4Fe-4S] cluster site.

It belongs to the ThiC family. In terms of assembly, homodimer. [4Fe-4S] cluster is required as a cofactor.

The enzyme catalyses 5-amino-1-(5-phospho-beta-D-ribosyl)imidazole + S-adenosyl-L-methionine = 4-amino-2-methyl-5-(phosphooxymethyl)pyrimidine + CO + 5'-deoxyadenosine + formate + L-methionine + 3 H(+). It functions in the pathway cofactor biosynthesis; thiamine diphosphate biosynthesis. Catalyzes the synthesis of the hydroxymethylpyrimidine phosphate (HMP-P) moiety of thiamine from aminoimidazole ribotide (AIR) in a radical S-adenosyl-L-methionine (SAM)-dependent reaction. This chain is Phosphomethylpyrimidine synthase, found in Nitrobacter hamburgensis (strain DSM 10229 / NCIMB 13809 / X14).